The sequence spans 194 residues: Nucleoside triphosphate pyrophosphatase (194 aa).

Aspartate 68 (proton acceptor) is an active-site residue.

Belongs to the Maf family. A divalent metal cation serves as cofactor.

Its subcellular location is the cytoplasm. The enzyme catalyses a ribonucleoside 5'-triphosphate + H2O = a ribonucleoside 5'-phosphate + diphosphate + H(+). It catalyses the reaction a 2'-deoxyribonucleoside 5'-triphosphate + H2O = a 2'-deoxyribonucleoside 5'-phosphate + diphosphate + H(+). In terms of biological role, nucleoside triphosphate pyrophosphatase. May have a dual role in cell division arrest and in preventing the incorporation of modified nucleotides into cellular nucleic acids. This Corynebacterium jeikeium (strain K411) protein is Nucleoside triphosphate pyrophosphatase.